Consider the following 131-residue polypeptide: Insertion element IS1 protein InsB (131 aa).

This sequence belongs to the transposase 27 family.

Its function is as follows. Absolutely required for transposition of IS1. In Shigella flexneri, this protein is Insertion element IS1 protein InsB (insB1).